Here is a 273-residue protein sequence, read N- to C-terminus: Phosphatidylglycerol--prolipoprotein diacylglyceryl transferase (273 aa).

Helical transmembrane passes span 19–39, 55–75, 90–110, 125–145, 174–194, 202–222, and 230–250; these read VHWYGLMYLLAFLCAWGLASY, LVFYGALGVVLGGRVGYVLFY, VWTGGMSFHGGFIGVMLAMIL, FIAPCVPTGLMFGRIGNFIGA, PSQIYQAICEGLLLFILLWWF, MAVSALFLMGYGVARFVVEFF, and GFILFGWMTKGQILTVPMLLI. Arg-138 is a binding site for a 1,2-diacyl-sn-glycero-3-phospho-(1'-sn-glycerol).

The protein belongs to the Lgt family.

The protein localises to the cell inner membrane. The enzyme catalyses L-cysteinyl-[prolipoprotein] + a 1,2-diacyl-sn-glycero-3-phospho-(1'-sn-glycerol) = an S-1,2-diacyl-sn-glyceryl-L-cysteinyl-[prolipoprotein] + sn-glycerol 1-phosphate + H(+). The protein operates within protein modification; lipoprotein biosynthesis (diacylglyceryl transfer). Its function is as follows. Catalyzes the transfer of the diacylglyceryl group from phosphatidylglycerol to the sulfhydryl group of the N-terminal cysteine of a prolipoprotein, the first step in the formation of mature lipoproteins. The protein is Phosphatidylglycerol--prolipoprotein diacylglyceryl transferase of Acinetobacter baylyi (strain ATCC 33305 / BD413 / ADP1).